The sequence spans 749 residues: Cytosolic phospholipase A2 (749 aa).

The phospholipid binding stretch occupies residues 1–178 (MSFIDPYQHI…MKKLLGPKKS (178 aa)). S2 bears the Phosphoserine mark. Residues 6-122 (PYQHIIVEHQ…KVGEKKEVPF (117 aa)) form the C2 domain. D40, T41, D43, N65, D93, A94, and N95 together coordinate Ca(2+). In terms of domain architecture, PLA2c spans 140–740 (SCPDLRFSMA…SNVEARRFFN (601 aa)). Catalysis depends on S228, which acts as the Nucleophile. T268 is modified (phosphothreonine). The disordered stretch occupies residues 427-456 (KHIVSNDSSDSDDESQEPKGTENEDAERDY). 3 positions are modified to phosphoserine: S434, S435, and S437. S505 is modified (phosphoserine; by MAPK). S515 is modified (phosphoserine). A Glycyl lysine isopeptide (Lys-Gly) (interchain with G-Cter in SUMO2) cross-link involves residue K541. The Proton acceptor role is filled by D549. Residue K606 forms a Glycyl lysine isopeptide (Lys-Gly) (interchain with G-Cter in SUMO2) linkage. Residues S727 and S729 each carry the phosphoserine modification.

As to quaternary structure, interacts with KAT5. Post-translationally, phosphorylated at both Ser-505 and Ser-727 in response to mitogenic stimuli.

The protein localises to the cytoplasm. It localises to the golgi apparatus membrane. The protein resides in the nucleus envelope. The catalysed reaction is a 1,2-diacyl-sn-glycero-3-phosphocholine + H2O = a 1-acyl-sn-glycero-3-phosphocholine + a fatty acid + H(+). It catalyses the reaction a 1-O-alkyl-2-acyl-sn-glycero-3-phosphocholine + H2O = a 1-O-alkyl-sn-glycero-3-phosphocholine + a fatty acid + H(+). The enzyme catalyses a 1-acyl-sn-glycero-3-phosphocholine + H2O = sn-glycerol 3-phosphocholine + a fatty acid + H(+). It carries out the reaction 1-hexadecanoyl-2-(5Z,8Z,11Z,14Z-eicosatetraenoyl)-sn-glycero-3-phosphocholine + H2O = 1-hexadecanoyl-sn-glycero-3-phosphocholine + (5Z,8Z,11Z,14Z)-eicosatetraenoate + H(+). The catalysed reaction is 1,2-di-(5Z,8Z,11Z,14Z-eicosatetraenoyl)-sn-glycero-3-phosphocholine + H2O = 1-(5Z,8Z,11Z,14Z-eicosatetraenoyl)-sn-glycero-3-phosphocholine + (5Z,8Z,11Z,14Z)-eicosatetraenoate + H(+). It catalyses the reaction 1-octadecanoyl-2-(5Z,8Z,11Z,14Z-eicosatetraenoyl)-sn-glycero-3-phosphocholine + H2O = 1-octadecanoyl-sn-glycero-3-phosphocholine + (5Z,8Z,11Z,14Z)-eicosatetraenoate + H(+). The enzyme catalyses 1-hexadecanoyl-2-(9Z,12Z-octadecadienoyl)-sn-glycero-3-phosphocholine + H2O = (9Z,12Z)-octadecadienoate + 1-hexadecanoyl-sn-glycero-3-phosphocholine + H(+). It carries out the reaction 1-octadecanoyl-2-(9Z,12Z,15Z-octadecatrienoyl)-sn-glycero-3-phosphocholine + H2O = (9Z,12Z,15Z)-octadecatrienoate + 1-octadecanoyl-sn-glycero-3-phosphocholine + H(+). The catalysed reaction is 1-(5Z,8Z,11Z,14Z-eicosatetraenoyl)-2-hexadecanoyl-sn-glycero-3-phosphocholine + H2O = 1-(5Z,8Z,11Z,14Z-eicosatetraenoyl)-sn-glycero-3-phosphocholine + hexadecanoate + H(+). It catalyses the reaction 1-O-hexadecyl-2-(5Z,8Z,11Z,14Z)-eicosatetraenoyl-sn-glycero-3-phosphocholine + H2O = 1-O-hexadecyl-sn-glycero-3-phosphocholine + (5Z,8Z,11Z,14Z)-eicosatetraenoate + H(+). The enzyme catalyses 1,2-di-(9Z-octadecenoyl)-sn-glycero-3-phospho-(1'-sn-glycerol) + H2O = 1-(9Z-octadecenoyl)-sn-glycero-3-phospho-(1'-sn-glycerol) + (9Z)-octadecenoate + H(+). It carries out the reaction 1-octadecanoyl-2-(5Z,8Z,11Z,14Z-eicosatetraenoyl)-sn-glycero-3-phosphate + H2O = 1-octadecanoyl-sn-glycero-3-phosphate + (5Z,8Z,11Z,14Z)-eicosatetraenoate + H(+). The catalysed reaction is 1-hexadecanoyl-sn-glycero-3-phosphocholine + H2O = sn-glycerol 3-phosphocholine + hexadecanoate + H(+). It catalyses the reaction 2-(prostaglandin E2)-sn-glycero-3-phosphoethanolamine + H2O = sn-glycero-3-phosphoethanolamine + prostaglandin E2 + H(+). The enzyme catalyses 2-[(15S)-hydroxy-(5Z,8Z,11Z,13E)-eicosatetraenoyl]-sn-glycero-3-phosphocholine + H2O = (15S)-hydroxy-(5Z,8Z,11Z,13E)-eicosatetraenoate + sn-glycerol 3-phosphocholine + H(+). It carries out the reaction 2-[(15R)-hydroxy-(5Z,8Z,11Z,13E)-eicosatetraenoyl]-sn-glycero-3-phosphocholine + H2O = (15R)-hydroxy-(5Z,8Z,11Z,13E)-eicosatetraenoate + sn-glycerol 3-phosphocholine + H(+). The catalysed reaction is 2-(prostaglandin E2)-sn-glycero-3-phosphocholine + H2O = prostaglandin E2 + sn-glycerol 3-phosphocholine + H(+). It catalyses the reaction 2-[(11R)-hydroxy-(5Z,8Z,12E,14Z)-eicosatetraenoyl]-sn-glycero-3-phosphocholine + H2O = (11R)-hydroxy-(5Z,8Z,12E,14Z)-eicosatetraenoate + sn-glycerol 3-phosphocholine + H(+). The enzyme catalyses 1-(5Z,8Z,11Z,14Z-eicosatetraenoyl)-2-O-hexadecyl-sn-glycero-3-phosphocholine + H2O = 2-O-hexadecyl-sn-glycero-3-phosphocholine + (5Z,8Z,11Z,14Z)-eicosatetraenoate + H(+). It carries out the reaction 1-octadecanoyl-2-(5Z,8Z,11Z,14Z-eicosatetraenoyl)-sn-glycero-3-phosphocholine + glycerol = 1-(5Z,8Z,11Z,14Z-eicosatetraenoyl)-glycerol + 1-octadecanoyl-sn-glycero-3-phosphocholine. The catalysed reaction is 1-octadecanoyl-2-(9Z,12Z,15Z-octadecatrienoyl)-sn-glycero-3-phosphocholine + glycerol = 1-(9Z,12Z,15Z-octadecatrienoyl)-glycerol + 1-octadecanoyl-sn-glycero-3-phosphocholine. It functions in the pathway membrane lipid metabolism; glycerophospholipid metabolism. The protein operates within lipid metabolism; arachidonate metabolism. Its pathway is lipid metabolism; prostaglandin biosynthesis. It participates in lipid metabolism; leukotriene B4 biosynthesis. Activated by cytosolic calcium, which is necessary for binding to membrane lipids. Activated by phosphorylation in response to mitogenic stimuli. Has primarily calcium-dependent phospholipase and lysophospholipase activities, with a major role in membrane lipid remodeling and biosynthesis of lipid mediators of the inflammatory response. Plays an important role in embryo implantation and parturition through its ability to trigger prostanoid production. Preferentially hydrolyzes the ester bond of the fatty acyl group attached at sn-2 position of phospholipids (phospholipase A2 activity). Selectively hydrolyzes sn-2 arachidonoyl group from membrane phospholipids, providing the precursor for eicosanoid biosynthesis via the cyclooxygenase pathway. In an alternative pathway of eicosanoid biosynthesis, hydrolyzes sn-2 fatty acyl chain of eicosanoid lysophopholipids to release free bioactive eicosanoids. Hydrolyzes the ester bond of the fatty acyl group attached at sn-1 position of phospholipids (phospholipase A1 activity) only if an ether linkage rather than an ester linkage is present at the sn-2 position. This hydrolysis is not stereospecific. Has calcium-independent phospholipase A2 and lysophospholipase activities in the presence of phosphoinositides. Has O-acyltransferase activity. Catalyzes the transfer of fatty acyl chains from phospholipids to a primary hydroxyl group of glycerol (sn-1 or sn-3), potentially contributing to monoacylglycerol synthesis. In Equus caballus (Horse), this protein is Cytosolic phospholipase A2 (PLA2G4A).